The chain runs to 129 residues: Cuticle protein 12.5 (129 aa).

10 repeat units span residues 7–10 (AAPA), 15–18 (AAPA), 23–26 (AAPA), 28–31 (AAPV), 37–40 (AAPA), 67–70 (AAPA), 79–82 (AAPA), 91–94 (AAPA), 103–106 (AAPA), and 117–120 (AAPA).

Its function is as follows. Component of the cuticle of migratory locust which contains more than 100 different structural proteins. The chain is Cuticle protein 12.5 from Locusta migratoria (Migratory locust).